We begin with the raw amino-acid sequence, 286 residues long: MDDRDLLEIIRPVCGSDTCSDDCAILTLPCGALVTSTDMLHERSDFPAGMTGWQIGWMSVAVTISDIAAMGAEPLQIVLAIGLDTEERLAEIVLGAQACCDTYGAVYAGGDLDAHSELTIVSTGVGIIRDGEPVRRGGAKPGDIICVTGTLGRAILGLTGDSRFWKDLCEPQPRVREGTVARLAGAHAMMDISDGLAISLYDIAAESHVGMEISSGRIPLPPEADVQVALEAALYGGGDFELLFFISEEKMKNLTIPVTQIGRVSEGLKITMDGMELPKKGYLHHW.

Mg(2+) contacts are provided by Asp22, Ser36, Thr37, and Asp38. Asp45 lines the substrate pocket. Mg(2+) contacts are provided by Asp66 and Asp111. Residues 110–111 and Arg136 each bind ATP; that span reads GD. A Mg(2+)-binding site is contributed by Asp191. Ser193 is an ATP binding site. Mg(2+) is bound at residue Asp194. A substrate-binding site is contributed by Tyr282.

It belongs to the thiamine-monophosphate kinase family.

It catalyses the reaction thiamine phosphate + ATP = thiamine diphosphate + ADP. The protein operates within cofactor biosynthesis; thiamine diphosphate biosynthesis; thiamine diphosphate from thiamine phosphate: step 1/1. Catalyzes the ATP-dependent phosphorylation of thiamine-monophosphate (TMP) to form thiamine-pyrophosphate (TPP), the active form of vitamin B1. In Methanospirillum hungatei JF-1 (strain ATCC 27890 / DSM 864 / NBRC 100397 / JF-1), this protein is Thiamine-monophosphate kinase.